The chain runs to 133 residues: Ribosome-binding factor A (133 aa).

This sequence belongs to the RbfA family. As to quaternary structure, monomer. Binds 30S ribosomal subunits, but not 50S ribosomal subunits or 70S ribosomes.

Its subcellular location is the cytoplasm. Its function is as follows. One of several proteins that assist in the late maturation steps of the functional core of the 30S ribosomal subunit. Associates with free 30S ribosomal subunits (but not with 30S subunits that are part of 70S ribosomes or polysomes). Required for efficient processing of 16S rRNA. May interact with the 5'-terminal helix region of 16S rRNA. The chain is Ribosome-binding factor A from Citrobacter koseri (strain ATCC BAA-895 / CDC 4225-83 / SGSC4696).